The sequence spans 677 residues: Methionine--tRNA ligase (677 aa).

The 'HIGH' region signature appears at 15 to 25; sequence PYANGSIHLGH. The Zn(2+) site is built by C146, C149, C159, and C162. Residues 333-337 carry the 'KMSKS' region motif; the sequence is KMSKS. Residue K336 participates in ATP binding. The 103-residue stretch at 575–677 folds into the tRNA-binding domain; that stretch reads DFAKIDLRVA…DGAKPGQQVK (103 aa).

This sequence belongs to the class-I aminoacyl-tRNA synthetase family. MetG type 1 subfamily. As to quaternary structure, homodimer. Zn(2+) is required as a cofactor.

The protein resides in the cytoplasm. It carries out the reaction tRNA(Met) + L-methionine + ATP = L-methionyl-tRNA(Met) + AMP + diphosphate. Its function is as follows. Is required not only for elongation of protein synthesis but also for the initiation of all mRNA translation through initiator tRNA(fMet) aminoacylation. The chain is Methionine--tRNA ligase from Salmonella typhimurium (strain LT2 / SGSC1412 / ATCC 700720).